An 890-amino-acid chain; its full sequence is Translation initiation factor IF-2 (890 aa).

A disordered region spans residues Leu-45 to Gln-304. The segment covering Ser-67 to Val-81 has biased composition (polar residues). Basic and acidic residues predominate over residues Val-92–Asp-217. Basic residues predominate over residues Gly-252 to Asn-266. Positions Lys-267–Ala-280 are enriched in basic and acidic residues. Residues Pro-389–Lys-558 enclose the tr-type G domain. The interval Gly-398 to Thr-405 is G1. Gly-398 to Thr-405 contacts GTP. Positions Gly-423–His-427 are G2. Residues Asp-444 to Gly-447 form a G3 region. Residues Asp-444–His-448 and Asn-498–Asp-501 each bind GTP. A G4 region spans residues Asn-498 to Asp-501. The G5 stretch occupies residues Ser-534–Lys-536. Lys-808 bears the N6-acetyllysine mark.

The protein belongs to the TRAFAC class translation factor GTPase superfamily. Classic translation factor GTPase family. IF-2 subfamily.

The protein localises to the cytoplasm. Its function is as follows. One of the essential components for the initiation of protein synthesis. Protects formylmethionyl-tRNA from spontaneous hydrolysis and promotes its binding to the 30S ribosomal subunits. Also involved in the hydrolysis of GTP during the formation of the 70S ribosomal complex. In Escherichia coli O81 (strain ED1a), this protein is Translation initiation factor IF-2.